Here is a 351-residue protein sequence, read N- to C-terminus: Photosystem II D2 protein (351 aa).

Residues 39-59 form a helical membrane-spanning segment; the sequence is TAYLAIGGWLTGTTFVTSWYT. Residue His-116 coordinates chlorophyll a. Residues 123-139 traverse the membrane as a helical segment; that stretch reads GFMLRQFEIARLVGIRP. The pheophytin a site is built by Gln-128 and Asn-141. Residues 151–164 form a helical membrane-spanning segment; that stretch reads VFVSVFLMYPLGQS. Position 196 (His-196) interacts with chlorophyll a. A helical membrane pass occupies residues 206 to 226; that stretch reads GALLCAIHGATVENTLFEDGE. His-213 and Phe-260 together coordinate a plastoquinone. Residue His-213 coordinates Fe cation. His-267 provides a ligand contact to Fe cation. A helical transmembrane segment spans residues 277–293; sequence GLWTSSIGIIGLALNLR.

This sequence belongs to the reaction center PufL/M/PsbA/D family. PSII is composed of 1 copy each of membrane proteins PsbA, PsbB, PsbC, PsbD, PsbE, PsbF, PsbH, PsbI, PsbJ, PsbK, PsbL, PsbM, PsbT, PsbX, PsbY, PsbZ, Psb30/Ycf12, peripheral proteins PsbO, CyanoQ (PsbQ), PsbU, PsbV and a large number of cofactors. It forms dimeric complexes. The D1/D2 heterodimer binds P680, chlorophylls that are the primary electron donor of PSII, and subsequent electron acceptors. It shares a non-heme iron and each subunit binds pheophytin, quinone, additional chlorophylls, carotenoids and lipids. There is also a Cl(-1) ion associated with D1 and D2, which is required for oxygen evolution. The PSII complex binds additional chlorophylls, carotenoids and specific lipids. is required as a cofactor.

The protein localises to the cellular thylakoid membrane. The enzyme catalyses 2 a plastoquinone + 4 hnu + 2 H2O = 2 a plastoquinol + O2. Functionally, photosystem II (PSII) is a light-driven water:plastoquinone oxidoreductase that uses light energy to abstract electrons from H(2)O, generating O(2) and a proton gradient subsequently used for ATP formation. It consists of a core antenna complex that captures photons, and an electron transfer chain that converts photonic excitation into a charge separation. The D1/D2 (PsbA/PsbD) reaction center heterodimer binds P680, the primary electron donor of PSII as well as several subsequent electron acceptors. D2 is needed for assembly of a stable PSII complex. This Synechococcus sp. (strain CC9605) protein is Photosystem II D2 protein.